The primary structure comprises 147 residues: Hemoglobin subunit beta (147 aa).

At Val2 the chain carries N-acetylvaline. A Globin domain is found at 3–147 (HLTGEEKAAV…VANALAHKYH (145 aa)). At Thr13 the chain carries Phosphothreonine. Ser45 is subject to Phosphoserine. The residue at position 60 (Lys60) is an N6-acetyllysine. His64 contributes to the heme b binding site. An N6-acetyllysine modification is found at Lys83. His93 contributes to the heme b binding site. Cys94 is modified (S-nitrosocysteine). Lys145 is modified (N6-acetyllysine).

Belongs to the globin family. Heterotetramer of two alpha chains and two beta chains. Red blood cells.

Functionally, involved in oxygen transport from the lung to the various peripheral tissues. The chain is Hemoglobin subunit beta (HBB) from Ailuropoda melanoleuca (Giant panda).